Consider the following 182-residue polypeptide: Putative pre-16S rRNA nuclease (182 aa).

Belongs to the YqgF nuclease family.

Its subcellular location is the cytoplasm. In terms of biological role, could be a nuclease involved in processing of the 5'-end of pre-16S rRNA. In Corynebacterium glutamicum (strain ATCC 13032 / DSM 20300 / JCM 1318 / BCRC 11384 / CCUG 27702 / LMG 3730 / NBRC 12168 / NCIMB 10025 / NRRL B-2784 / 534), this protein is Putative pre-16S rRNA nuclease.